Here is a 290-residue protein sequence, read N- to C-terminus: CMRF35-like molecule 1 (290 aa).

The N-terminal stretch at 1-19 (MPLLTLYLLLFWLSGYSIV) is a signal peptide. Residues 20 to 126 (TQITGPTTVN…LGVTVQVTID (107 aa)) enclose the Ig-like V-type domain. At 20–156 (TQITGPTTVN…DNRHKLLKLS (137 aa)) the chain is on the extracellular side. Disulfide bonds link Cys40–Cys108 and Cys54–Cys62. A glycan (N-linked (GlcNAc...) asparagine) is linked at Asn88. A helical transmembrane segment spans residues 157–177 (VLLPLIFTILLLLLVAASLLA). At 178–290 (WRMMKYQQKA…PTEYSTISRP (113 aa)) the chain is on the cytoplasmic side. Positions 267 to 290 (GHLSSHLPGRGPEEPTEYSTISRP) are disordered.

The protein belongs to the CD300 family. In terms of assembly, interacts with PTPN6/SHP-1 in a tyrosine phosphorylation dependent manner. Interacts with IL4R. In terms of processing, phosphorylated on tyrosine. As to expression, highly expressed in spleen, peripheral blood leukocyte and monocyte, and lung. Weakly expressed in thymus, heart, brain, placenta, liver, skeletal muscle, kidney, pancreas, prostate, testis, ovary, small intestine or colon. Expressed selectively in monocytes and monocyte-related cells.

The protein resides in the cell membrane. Functionally, acts as an inhibitory receptor for myeloid cells and mast cells. Positively regulates the phagocytosis of apoptotic cells (efferocytosis) via phosphatidylserine (PS) recognition; recognizes and binds PS as a ligand which is expressed on the surface of apoptotic cells. Plays an important role in the maintenance of immune homeostasis, by promoting macrophage-mediated efferocytosis and by inhibiting dendritic cell-mediated efferocytosis. Negatively regulates Fc epsilon receptor-dependent mast cell activation and allergic responses via binding to ceramide and sphingomyelin which act as ligands. May act as a coreceptor for interleukin 4 (IL-4). Associates with and regulates IL-4 receptor alpha-mediated responses by augmenting IL-4- and IL-13-induced signaling. Negatively regulates the Toll-like receptor (TLR) signaling mediated by MYD88 and TRIF through activation of PTPN6/SHP-1 and PTPN11/SHP-2. Inhibits osteoclast formation. Induces macrophage cell death upon engagement. The polypeptide is CMRF35-like molecule 1 (CD300LF) (Homo sapiens (Human)).